A 284-amino-acid chain; its full sequence is uncharacterized protein (284 aa).

Residues 1–20 (MLHNIQSILQFLLFVSSVQA) form the signal peptide. One can recognise an Apple domain in the interval 38 to 121 (CFEFKKNYWI…FTVNFFRNIC (84 aa)). 3 disulfides stabilise this stretch: C38/C121, C63/C89, and C67/C77. Residue N256 is glycosylated (N-linked (GlcNAc...) asparagine). The helical transmembrane segment at 264-284 (SSTGLKFTTGLLIILVVFLFL) threads the bilayer.

The protein resides in the membrane. This is an uncharacterized protein from Caenorhabditis elegans.